Reading from the N-terminus, the 657-residue chain is Probable Xaa-Pro aminopeptidase P (657 aa).

Positions 453, 464, 562, and 576 each coordinate Mn(2+).

It belongs to the peptidase M24B family. Mn(2+) serves as cofactor.

It carries out the reaction Release of any N-terminal amino acid, including proline, that is linked to proline, even from a dipeptide or tripeptide.. Functionally, catalyzes the removal of a penultimate prolyl residue from the N-termini of peptides. This chain is Probable Xaa-Pro aminopeptidase P (ampp), found in Talaromyces stipitatus (strain ATCC 10500 / CBS 375.48 / QM 6759 / NRRL 1006) (Penicillium stipitatum).